Reading from the N-terminus, the 181-residue chain is RING-H2 finger protein ATL72 (181 aa).

Residues 34 to 54 (VIILAALLCALICALSLNSAL) form a helical membrane-spanning segment. An RING-type; atypical zinc finger spans residues 114–156 (CLICLGDFEDGEKVRVLPKCNHGFHVRCIDTWLLSRSSCPTCR).

The protein belongs to the RING-type zinc finger family. ATL subfamily.

The protein localises to the membrane. It catalyses the reaction S-ubiquitinyl-[E2 ubiquitin-conjugating enzyme]-L-cysteine + [acceptor protein]-L-lysine = [E2 ubiquitin-conjugating enzyme]-L-cysteine + N(6)-ubiquitinyl-[acceptor protein]-L-lysine.. It participates in protein modification; protein ubiquitination. In Arabidopsis thaliana (Mouse-ear cress), this protein is RING-H2 finger protein ATL72 (ATL72).